The chain runs to 307 residues: Bifunctional protein FolD (307 aa).

NADP(+)-binding positions include 165-167, Ser190, and Ile231; that span reads GRS.

This sequence belongs to the tetrahydrofolate dehydrogenase/cyclohydrolase family. As to quaternary structure, homodimer.

The enzyme catalyses (6R)-5,10-methylene-5,6,7,8-tetrahydrofolate + NADP(+) = (6R)-5,10-methenyltetrahydrofolate + NADPH. It carries out the reaction (6R)-5,10-methenyltetrahydrofolate + H2O = (6R)-10-formyltetrahydrofolate + H(+). It functions in the pathway one-carbon metabolism; tetrahydrofolate interconversion. Catalyzes the oxidation of 5,10-methylenetetrahydrofolate to 5,10-methenyltetrahydrofolate and then the hydrolysis of 5,10-methenyltetrahydrofolate to 10-formyltetrahydrofolate. The polypeptide is Bifunctional protein FolD (Koribacter versatilis (strain Ellin345)).